The primary structure comprises 336 residues: CMP-sialic acid transporter (336 aa).

Residues 1–9 are Cytoplasmic-facing; that stretch reads MAPARENVS. The chain crosses the membrane as a helical span at residues 10–30; sequence LFFKLYCLTVMTLVAAAYTVA. Topologically, residues 31–45 are lumenal; sequence LRYTRTTAEELYFST. A helical membrane pass occupies residues 46-64; the sequence is TAVCITEVIKLLISVGLLA. CMP-N-acetyl-beta-neuraminate is bound at residue lysine 55. At 65 to 87 the chain is on the cytoplasmic side; that stretch reads KETGSLGRFKASLSENVLGSPKE. Residues 88–108 form a helical membrane-spanning segment; that stretch reads LAKLSVPSLVYAVQNNMAFLA. Residue 101 to 102 coordinates CMP-N-acetyl-beta-neuraminate; it reads QN. Residues 109 to 114 are Lumenal-facing; sequence LSNLDA. A helical membrane pass occupies residues 115–135; the sequence is AVYQVTYQLKIPCTALCTVLM. CMP-N-acetyl-beta-neuraminate is bound at residue 117–124; the sequence is YQVTYQLK. Residues 136–141 are Cytoplasmic-facing; the sequence is LNRTLS. A helical membrane pass occupies residues 142–160; sequence KLQWISVFMLCGGVTLVQW. The Lumenal segment spans residues 161–175; sequence KPAQATKVVVAQNPL. A helical membrane pass occupies residues 176–196; it reads LGFGAIAIAVLCSGFAGVYFE. Residue serine 188 coordinates CMP-N-acetyl-beta-neuraminate. The Cytoplasmic portion of the chain corresponds to 197–209; it reads KVLKSSDTSLWVR. CMP-N-acetyl-beta-neuraminate is bound at residue 210-214; that stretch reads NIQMY. The helical transmembrane segment at 210–228 threads the bilayer; the sequence is NIQMYLSGIVVTLAGTYLS. The Lumenal portion of the chain corresponds to 229–243; that stretch reads DGAEIQEKGFFYGYT. A helical membrane pass occupies residues 244 to 262; that stretch reads YYVWFVIFLASVGGLYTSV. Over 263–269 the chain is Cytoplasmic; it reads VVKYTDN. Residues 270 to 288 form a helical membrane-spanning segment; it reads IMKGFSAAAAIVLSTIASV. Lysine 272 contacts CMP-N-acetyl-beta-neuraminate. Topologically, residues 289–296 are lumenal; that stretch reads LLFGLQIT. Residues 297 to 315 traverse the membrane as a helical segment; it reads LSFALGALLVCVSIYLYGL. At 316–336 the chain is on the cytoplasmic side; that stretch reads PRQDTTSIQQEATSKERIIGV. The interval 316 to 336 is disordered; sequence PRQDTTSIQQEATSKERIIGV.

Belongs to the nucleotide-sugar transporter family. SLC35A subfamily. As to quaternary structure, monomer. As to expression, ubiquitous. Found in all the tissues examined including skeletal muscle, brain, heart, liver, kidney and spleen.

The protein resides in the golgi apparatus membrane. The enzyme catalyses CMP-N-acetyl-beta-neuraminate(in) + CMP(out) = CMP-N-acetyl-beta-neuraminate(out) + CMP(in). It catalyses the reaction CMP-N-acetyl-beta-neuraminate(in) + AMP(out) = CMP-N-acetyl-beta-neuraminate(out) + AMP(in). It carries out the reaction CDP-L-ribitol(in) + CDP(out) = CDP-L-ribitol(out) + CDP(in). The catalysed reaction is UMP(out) + CMP-N-acetyl-beta-neuraminate(in) = UMP(in) + CMP-N-acetyl-beta-neuraminate(out). Transports CMP-sialic acid from the cytosol into the Golgi apparatus, functioning as an antiporter that exchanges CMP-sialic acid for CMP. Binds both CMP-sialic acid and free CMP, but has higher affinity for free CMP. Also able to exchange CMP-sialic acid for AMP and UMP. Also mediates the transport of CDP-ribitol. The chain is CMP-sialic acid transporter from Mus musculus (Mouse).